Reading from the N-terminus, the 225-residue chain is UPF0758 protein BCQ_4241 (225 aa).

The MPN domain occupies 103 to 225 (SIRSPEDCAR…FVSLKEKGHI (123 aa)). H174, H176, and D187 together coordinate Zn(2+). The short motif at 174–187 (HNHPSGDPAPSRED) is the JAMM motif element.

Belongs to the UPF0758 family.

The sequence is that of UPF0758 protein BCQ_4241 from Bacillus cereus (strain Q1).